The chain runs to 138 residues: Spermidine export protein MdtJ (138 aa).

4 consecutive transmembrane segments (helical) span residues 1–21 (MIYW…TLSM), 30–50 (VVGM…LAMA), 54–74 (VALG…ITVF), and 81–101 (ESLS…IMLI).

Belongs to the drug/metabolite transporter (DMT) superfamily. Small multidrug resistance (SMR) (TC 2.A.7.1) family. MdtJ subfamily. In terms of assembly, forms a complex with MdtI.

The protein resides in the cell inner membrane. Functionally, catalyzes the excretion of spermidine. The sequence is that of Spermidine export protein MdtJ from Photorhabdus laumondii subsp. laumondii (strain DSM 15139 / CIP 105565 / TT01) (Photorhabdus luminescens subsp. laumondii).